A 721-amino-acid chain; its full sequence is Sodium/hydrogen exchanger 6 (721 aa).

Residues 1–44 form a disordered region; sequence MTSPKPWARSAGSCQTQRAVRTRKKECREEGESDTEKGPAASSA. Residues 26-37 show a composition bias toward basic and acidic residues; it reads ECREEGESDTEK. The next 12 membrane-spanning stretches (helical) occupy residues 91-111, 123-143, 196-216, 231-251, 272-292, 298-318, 344-364, 388-412, 434-454, 456-476, 499-519, and 535-555; these read SANLLIFILLLTLTILTIWLF, GLAMIYGLLVGLVLRYGIHVP, VTFDPEVFFNILLPPIIFYAG, ILAYAFLGTAISCFVIGSIMY, CLLFGAIVSATDPVTVLAIFH, VELYALLFGESVLNDAVAIVL, IGIFLGIFSGSFAMGAATGVV, MSWSTFLLAEAWGFTGVVAVLFCGI, FELLNFLAENFIFSYMGLTLF, FQNHVFNPTFVVGAFIAIFLG, NFQHMMMFAGLRGAMAFALAI, and LLIVFFTVWVFGGGTTAMLSC.

The protein belongs to the monovalent cation:proton antiporter 1 (CPA1) transporter (TC 2.A.36) family. In terms of assembly, homodimer. Interacts with RACK1; regulates the distribution of SLC9A6 between endosomes and the plasma membrane. Ubiquitinated (in vitro). In terms of processing, glycosylated.

Its subcellular location is the endosome membrane. It localises to the recycling endosome membrane. The protein localises to the early endosome membrane. It is found in the late endosome membrane. The protein resides in the cell membrane. The enzyme catalyses Na(+)(in) + H(+)(out) = Na(+)(out) + H(+)(in). It catalyses the reaction K(+)(in) + H(+)(out) = K(+)(out) + H(+)(in). In terms of biological role, endosomal Na(+), K(+)/H(+) antiporter. Mediates the electroneutral exchange of endosomal luminal H(+) for a cytosolic Na(+) or K(+). By facilitating proton efflux, SLC9A6 counteracts the acidity generated by vacuolar (V)-ATPase, thereby limiting luminal acidification. Responsible for alkalizing and maintaining the endosomal pH, and consequently in, e.g., endosome maturation and trafficking of recycling endosomal cargo. Plays a critical role during neurodevelopment by regulating synaptic development and plasticity. Implicated in the maintenance of cell polarity in a manner that is dependent on its ability to modulate intravesicular pH. Regulates intracelular pH in some specialized cells, osteoclasts and stereocilia where this transporter localizes to the plasma membrane. The chain is Sodium/hydrogen exchanger 6 from Rattus norvegicus (Rat).